The primary structure comprises 133 residues: MNKTILIGRLTKDPELKYIPNTGTATCNFTLAVDRRFKKEGQQEADFIPIVVWGKQAESTANYMSKGKLMGVSGRIQTRSYDAKDGTRRYVTEVVAEEVKFLEWGKDSNIENVDFGVPVQEDITPVDNSDIPF.

Residues 1 to 103 enclose the SSB domain; that stretch reads MNKTILIGRL…VVAEEVKFLE (103 aa).

As to quaternary structure, homotetramer.

The chain is Single-stranded DNA-binding protein 2 (ssb2) from Clostridium acetobutylicum (strain ATCC 824 / DSM 792 / JCM 1419 / IAM 19013 / LMG 5710 / NBRC 13948 / NRRL B-527 / VKM B-1787 / 2291 / W).